The sequence spans 324 residues: Probable 6-phosphogluconolactonase 4, chloroplastic (324 aa).

Residues 1-63 constitute a chloroplast transit peptide; the sequence is MSVSAAVAAA…PAMATDGAAA (63 aa). The interval 19-43 is disordered; the sequence is ARHRSPPASRVAATSRGRPFSSGPH.

The protein belongs to the glucosamine/galactosamine-6-phosphate isomerase family. 6-phosphogluconolactonase subfamily.

Its subcellular location is the plastid. The protein resides in the chloroplast. It catalyses the reaction 6-phospho-D-glucono-1,5-lactone + H2O = 6-phospho-D-gluconate + H(+). It functions in the pathway carbohydrate degradation; pentose phosphate pathway; D-ribulose 5-phosphate from D-glucose 6-phosphate (oxidative stage): step 2/3. Its function is as follows. Hydrolysis of 6-phosphogluconolactone to 6-phosphogluconate. The polypeptide is Probable 6-phosphogluconolactonase 4, chloroplastic (Oryza sativa subsp. japonica (Rice)).